The sequence spans 37 residues: Large ribosomal subunit protein bL36 (37 aa).

Belongs to the bacterial ribosomal protein bL36 family.

This chain is Large ribosomal subunit protein bL36, found in Desulfitobacterium hafniense (strain Y51).